Reading from the N-terminus, the 55-residue chain is Protein CADMIUM TOLERANCE 1 (55 aa).

A helical transmembrane segment spans residues 24–40 (GCLYACIFTALCCFCCY).

This sequence belongs to the CYSTM1 family.

It localises to the cell membrane. The protein resides in the secreted. The protein localises to the cell wall. Confers resistance to heavy metal ions (e.g. cadmium (CdCl(2)) and copper (CuCl(2))) by chelating them at the plasma membrane of root cells, thus stopping their entry and reducing their accumulation. This Echinochloa crus-galli subsp. caudata (Cockspur) protein is Protein CADMIUM TOLERANCE 1.